A 300-amino-acid chain; its full sequence is Bidirectional sugar transporter SWEET12 (300 aa).

At 1-4 (MVQA) the chain is on the extracellular side. Residues 5–25 (LVFAVGIVGNILSFLVILAPV) form a helical membrane-spanning segment. One can recognise a MtN3/slv 1 domain in the interval 8–92 (AVGIVGNILS…TVYLLYAPRQ (85 aa)). At 26–38 (PTFYRVYKKKSTE) the chain is on the cytoplasmic side. A helical transmembrane segment spans residues 39-61 (SFQSVPYAVALLSAMLWLYYALL). The Extracellular segment spans residues 62 to 67 (TSDLLL). The chain crosses the membrane as a helical span at residues 68–88 (LSINSIGCLVESLYLTVYLLY). Over 89-99 (APRQAMAFTLK) the chain is Cytoplasmic. A helical membrane pass occupies residues 100 to 120 (LVCAMNLALFAAVVAALQLLV). The Extracellular portion of the chain corresponds to 121-128 (KATDRRVT). The chain crosses the membrane as a helical span at residues 129–149 (LAGGIGASFALAVFVAPLTII). In terms of domain architecture, MtN3/slv 2 spans 131-213 (GGIGASFALA…VLYVVYKNPK (83 aa)). Over 150 to 162 (RQVIRTKSVEFMP) the chain is Cytoplasmic. The chain crosses the membrane as a helical span at residues 163–183 (FWLSFFLTLSAVVWFFYGLLM). At 184-185 (KD) the chain is on the extracellular side. Residues 186–206 (FFVATPNVLGLLFGLAQMVLY) traverse the membrane as a helical segment. Residues 207–300 (VVYKNPKKNS…PPALPAVEVA (94 aa)) are Cytoplasmic-facing. The interval 256-300 (ADLEAAAPATPQRPADDDAIDHRSVVVDIPPPPQPPPALPAVEVA) is disordered. Over residues 269-280 (PADDDAIDHRSV) the composition is skewed to basic and acidic residues. Over residues 284-294 (IPPPPQPPPAL) the composition is skewed to pro residues.

This sequence belongs to the SWEET sugar transporter family. Forms homooligomers and/or heterooligomers.

It localises to the cell membrane. Functionally, mediates both low-affinity uptake and efflux of sugar across the plasma membrane. Confers blight susceptibility. Confers TAL effector-mediated susceptibility to Xanthomonas oryzae pv. oryzae. The polypeptide is Bidirectional sugar transporter SWEET12 (SWEET12) (Oryza sativa subsp. japonica (Rice)).